Reading from the N-terminus, the 210-residue chain is MMMNGQKMAAAEVAVQLPESKMVTENIGGAAAAMRPFGRKAEVMNVLLRVLCMVTSVAALSSMVTAQQSSTVSIYGFMLPIQSKWSFSHSFEYVVGVSAVVAAHSLLQLLISVSRLLRKSPVIQSRSHAWLVFAGDQVFAYAMISAGAAASGVTNLNRTGIRHTALPNFCKPLQSFCDHVAVSIFFTFLSCFLLAASAVQEVIWLSRSKY.

At Met1 to Asn45 the chain is on the cytoplasmic side. The helical transmembrane segment at Val46 to Ala66 threads the bilayer. At Gln67–Glu92 the chain is on the extracellular side. Residues Tyr93–Val113 traverse the membrane as a helical segment. Over Ser114–His128 the chain is Cytoplasmic. A helical transmembrane segment spans residues Ala129–Ala149. At Ala150 to Asp178 the chain is on the extracellular side. Asn157 carries an N-linked (GlcNAc...) asparagine glycan. Residues His179–Val199 traverse the membrane as a helical segment. Residues Gln200–Tyr210 lie on the Cytoplasmic side of the membrane.

The protein belongs to the Casparian strip membrane proteins (CASP) family. In terms of assembly, homodimer and heterodimers.

The protein resides in the cell membrane. This chain is CASP-like protein 3A2, found in Populus trichocarpa (Western balsam poplar).